We begin with the raw amino-acid sequence, 438 residues long: Phosphoribosylamine--glycine ligase (438 aa).

An ATP-grasp domain is found at 108-316 (REFMERNNIP…LLEIAKGIVE (209 aa)). 135–194 (IDEYGKPVVVKPLGLTGGKGVKVVGYQLKDNEEAKEYAEHIIRKDGKVLIEERTDGVEFT) provides a ligand contact to ATP. Mg(2+)-binding residues include glutamine 274, glutamate 286, and asparagine 288. Mn(2+) is bound by residues glutamine 274, glutamate 286, and asparagine 288.

This sequence belongs to the GARS family. It depends on Mg(2+) as a cofactor. Requires Mn(2+) as cofactor.

It carries out the reaction 5-phospho-beta-D-ribosylamine + glycine + ATP = N(1)-(5-phospho-beta-D-ribosyl)glycinamide + ADP + phosphate + H(+). Its pathway is purine metabolism; IMP biosynthesis via de novo pathway; N(1)-(5-phospho-D-ribosyl)glycinamide from 5-phospho-alpha-D-ribose 1-diphosphate: step 2/2. This is Phosphoribosylamine--glycine ligase from Pyrococcus horikoshii (strain ATCC 700860 / DSM 12428 / JCM 9974 / NBRC 100139 / OT-3).